Reading from the N-terminus, the 1163-residue chain is Actin cross-linking toxin VgrG1 (1163 aa).

The ACD domain occupies 728 to 1163 (TPDFPTHFPK…NPQEWQRIIA (436 aa)). Residue 739 to 743 (SIGIE) coordinates ATP. Residues glutamate 743 and glutamate 805 each coordinate Mg(2+). Residue serine 808 coordinates ATP. Mg(2+) is bound at residue glutamine 889. Arginine 995 contributes to the ATP binding site. Glutamate 1066 serves as a coordination point for Mg(2+).

Belongs to the VgrG protein family. Interacts with protein VC1417. Mg(2+) is required as a cofactor.

It is found in the secreted. The protein resides in the host cytoplasm. The protein localises to the host cytosol. In terms of biological role, part of the type VI secretion system (T6SS) specialized secretion system, which delivers several virulence factors in both prokaryotic and eukaryotic cells during infection. Forms the spike at the tip of the elongating tube probably formed by hemolysin co-regulated protein/Hcp. Allows the delivery of the TseL antibacterial toxin to target cells where it exerts its toxicity. Also acts directly as an actin-directed toxin that catalyzes the covalent cross-linking of host cytoplasmic monomeric actin. Mediates the cross-link between 'Lys-50' of one monomer and 'Glu-270' of another actin monomer, resulting in formation of highly toxic actin oligomers that cause cell rounding. The toxin can be highly efficient at very low concentrations by acting on formin homology family proteins: toxic actin oligomers bind with high affinity to formins and adversely affect both nucleation and elongation abilities of formins, causing their potent inhibition in both profilin-dependent and independent manners. Acts as an acid--amino-acid ligase that transfers the gamma-phosphoryl group of ATP to the 'Glu-270' actin residue, resulting in the formation of an activated acyl phosphate intermediate. This intermediate is further hydrolyzed and the energy of hydrolysis is utilized for the formation of the amide bond between actin subunits. The protein is Actin cross-linking toxin VgrG1 of Vibrio cholerae serotype O1 (strain ATCC 39315 / El Tor Inaba N16961).